The following is a 229-amino-acid chain: Potassium/proton antiporter CemA (229 aa).

Transmembrane regions (helical) follow at residues 7-27 (FTPL…SLSF), 114-134 (IISF…LVIL), and 190-210 (ISGL…YWIF).

The protein belongs to the CemA family.

The protein resides in the plastid. The protein localises to the chloroplast inner membrane. It carries out the reaction K(+)(in) + H(+)(out) = K(+)(out) + H(+)(in). Its function is as follows. Contributes to K(+)/H(+) antiport activity by supporting proton efflux to control proton extrusion and homeostasis in chloroplasts in a light-dependent manner to modulate photosynthesis. Prevents excessive induction of non-photochemical quenching (NPQ) under continuous-light conditions. Indirectly promotes efficient inorganic carbon uptake into chloroplasts. This is Potassium/proton antiporter CemA from Jasminum nudiflorum (Winter jasmine).